The sequence spans 146 residues: Hemoglobin subunit beta (146 aa).

Positions 2–146 constitute a Globin domain; sequence EWTDFERATI…VVNSLGRQYH (145 aa). Residues His-63 and His-92 each coordinate heme b.

It belongs to the globin family. As to quaternary structure, heterotetramer of two alpha chains and two beta chains. Can form polymers. In terms of tissue distribution, red blood cells.

In terms of biological role, involved in oxygen transport from gills to the various peripheral tissues. The protein is Hemoglobin subunit beta (hbb) of Chelidonichthys kumu (Bluefin gurnard).